A 496-amino-acid polypeptide reads, in one-letter code: Beta-amylase (496 aa).

Substrate contacts are provided by Asp54, His94, and Asp102. The Proton donor role is filled by Glu187. 3 residues coordinate substrate: Lys296, His301, and Thr343. Residue Glu381 is the Proton acceptor of the active site. Substrate-binding positions include 382 to 383 (NA) and Arg421. Residues 455-496 (YNHGIPPLKRSGPKIPDDVLNEATKPIPPFPWDSETDMKVDG) are disordered.

This sequence belongs to the glycosyl hydrolase 14 family.

The catalysed reaction is Hydrolysis of (1-&gt;4)-alpha-D-glucosidic linkages in polysaccharides so as to remove successive maltose units from the non-reducing ends of the chains.. This is Beta-amylase (BMY1) from Medicago sativa (Alfalfa).